Here is a 395-residue protein sequence, read N- to C-terminus: Zinc-regulated GTPase metalloprotein activator 1E (395 aa).

The disordered stretch occupies residues methionine 1–leucine 22. A compositionally biased stretch (acidic residues) spans valine 8–proline 20. The psi-PxLVp motif motif lies at glutamate 17 to proline 24. Glycine 49 to threonine 56 provides a ligand contact to GTP. Positions 107, 109, and 110 each coordinate Zn(2+). Residues cysteine 107–cysteine 110 carry the CXCC motif motif. GTP contacts are provided by residues cysteine 110–aspartate 114 and asparagine 203–aspartate 206. The CobW C-terminal domain occupies isoleucine 274 to valine 377.

The protein belongs to the SIMIBI class G3E GTPase family. ZNG1 subfamily.

The protein localises to the nucleus. The enzyme catalyses GTP + H2O = GDP + phosphate + H(+). Zinc chaperone that directly transfers zinc cofactor to target metalloproteins, thereby activating them. Catalyzes zinc insertion into the active site of methionine aminopeptidase METAP1, which function to cleave the initiator methionine from polypeptides during or after protein translation. Mechanistically, the N-terminal psi-PxLVp motif binds to the C6H2-type zinc finger of inactive form of METAP1. After formation of the docked complex, zinc is transferred from the CXCC motif in the GTPase domain of ZNG1E to the zinc binding site in the peptidase domain of METAP1 in a process requiring GTP hydrolysis. GTP/GDP exchange is required for release of active METAP1. The protein is Zinc-regulated GTPase metalloprotein activator 1E of Homo sapiens (Human).